A 163-amino-acid polypeptide reads, in one-letter code: Probable calcium-binding protein CML26 (163 aa).

N-acetylalanine is present on Ala2. EF-hand domains lie at 16–51 (STDMELKKVFDKFDANGDGKISVSELGNVFKSMGTS), 52–82 (YTEEELNRVLDEIDIDCDGFINQEEFATICR), 85–120 (SSAVEIREAFDLYDQNKNGLISSSEIHKVLNRLGMT), and 121–156 (CSVEDCVRMIGHVDTDGDGNVNFEEFQKMMSSPELV). Ca(2+) contacts are provided by Asp29, Asn31, Asp33, Lys35, Glu40, Asp65, Asp67, Asp69, Glu76, Asp98, Asn100, Asn102, Glu109, Asp134, Asp136, Asp138, Asn140, and Glu145.

Its function is as follows. Potential calcium sensor. The sequence is that of Probable calcium-binding protein CML26 (CML26) from Arabidopsis thaliana (Mouse-ear cress).